The following is a 61-amino-acid chain: Potassium channel toxin alpha-KTx 6.8 (61 aa).

Residues 1–23 form the signal peptide; it reads MNAKFILLLLVVTTTILLPDTQG. Cystine bridges form between Cys29–Cys50, Cys35–Cys55, Cys39–Cys57, and Cys45–Cys60. Position 60 is a cysteine amide (Cys60).

This sequence belongs to the short scorpion toxin superfamily. Potassium channel inhibitor family. Alpha-KTx 06 subfamily. As to expression, expressed by the venom gland.

The protein resides in the secreted. Blocker of voltage-gated potassium channels. The chain is Potassium channel toxin alpha-KTx 6.8 from Opistophthalmus carinatus (African yellow leg scorpion).